The following is a 370-amino-acid chain: Protein maelstrom 2 (370 aa).

Residues 2–68 (AQNKPNAFMA…VLERESKTER (67 aa)) constitute a DNA-binding region (HMG box).

This sequence belongs to the maelstrom family.

The protein resides in the cytoplasm. It localises to the nucleus. In terms of biological role, involved both in the piRNA and miRNA metabolic processes. As a component of the meiotic nuage, plays a central role during oogenesis by repressing transposable elements and preventing their mobilization, which is essential for the germline integrity. Repression of transposable elements is mediated via the piRNA metabolic process, which mediates the repression of transposable elements during meiosis by forming complexes composed of piRNAs and Piwi proteins and governs the repression of transposons. As a nuclear component, it is required for proper differentiation in the germline stem cell (GSC) lineage by repressing microRNA-7 (miR-7), thereby acting as an indirect regulator of bag-of-marbles (Bam). Acts by binding to the promoter of miR-7 gene and repressing its expression; miR-7 repression alleviates the Bam repression by miR-7, thereby allowing differentiation in the germline stem cell (GSC) lineage. This chain is Protein maelstrom 2 (mael2), found in Drosophila pseudoobscura pseudoobscura (Fruit fly).